Here is a 461-residue protein sequence, read N- to C-terminus: Argininosuccinate lyase (461 aa).

It belongs to the lyase 1 family. Argininosuccinate lyase subfamily.

The protein resides in the cytoplasm. The enzyme catalyses 2-(N(omega)-L-arginino)succinate = fumarate + L-arginine. Its pathway is amino-acid biosynthesis; L-arginine biosynthesis; L-arginine from L-ornithine and carbamoyl phosphate: step 3/3. Strongly inhibited by L-arginine. Inhibitory effects are lowered at pH 7.0 compared to those at pH 8.0. At 42 degrees Celsius and pH 8.0, activity decreases to 77% and 25% in the presence of 1 mM and 10 mM arginine, respectively. The other amino and organic acids do not affect activity. Catalyzes the last step of arginine biosynthesis, the conversion of argininosuccinate into L-arginine and fumarate. This is Argininosuccinate lyase from Nostoc sp. (strain PCC 7120 / SAG 25.82 / UTEX 2576).